The chain runs to 218 residues: 7-cyano-7-deazaguanine synthase 1 (218 aa).

9–19 (YSGGMDSFTVL) contacts ATP. 4 residues coordinate Zn(2+): Cys185, Cys193, Cys196, and Cys199.

The protein belongs to the QueC family. The cofactor is Zn(2+).

The catalysed reaction is 7-carboxy-7-deazaguanine + NH4(+) + ATP = 7-cyano-7-deazaguanine + ADP + phosphate + H2O + H(+). It functions in the pathway purine metabolism; 7-cyano-7-deazaguanine biosynthesis. Catalyzes the ATP-dependent conversion of 7-carboxy-7-deazaguanine (CDG) to 7-cyano-7-deazaguanine (preQ(0)). This Colwellia psychrerythraea (strain 34H / ATCC BAA-681) (Vibrio psychroerythus) protein is 7-cyano-7-deazaguanine synthase 1.